A 1700-amino-acid chain; its full sequence is uncharacterized protein (1700 aa).

A helical transmembrane segment spans residues 986–1006 (APITQYPVLCYLLYLLSYYLV). Coiled-coil stretches lie at residues 1246 to 1278 (DQNA…REIK) and 1657 to 1684 (QDMD…IEGD). The disordered stretch occupies residues 1650–1700 (DTEPDIMQDMDGEPQEADELEDLKEEAESLDIEGDYFAEEDEDYAQEDFIE). Positions 1651 to 1700 (TEPDIMQDMDGEPQEADELEDLKEEAESLDIEGDYFAEEDEDYAQEDFIE) are enriched in acidic residues.

The protein localises to the host membrane. The protein resides in the virion. This is an uncharacterized protein from Acanthamoeba polyphaga (Amoeba).